We begin with the raw amino-acid sequence, 64 residues long: Crotamine CRO3 (64 aa).

Positions 1 to 22 (MILYLLFAFLFLAFLSEPGNAY) are cleaved as a signal peptide. 3 disulfide bridges follow: Cys25–Cys57, Cys32–Cys51, and Cys39–Cys58.

This sequence belongs to the crotamine-myotoxin family. Monomer. As to expression, expressed by the venom gland.

It localises to the secreted. Cationic peptide that possesses multiple functions. It acts as a cell-penetrating peptide (CPP), and as a potent voltage-gated potassium channel (Kv) inhibitor. It exhibits antimicrobial activities, hind limb paralysis, and severe muscle necrosis by a non-enzymatic mechanism. The sequence is that of Crotamine CRO3 (CRO3) from Crotalus durissus terrificus (South American rattlesnake).